Here is a 316-residue protein sequence, read N- to C-terminus: Serpentine receptor class gamma-4 (316 aa).

7 helical membrane-spanning segments follow: residues 21–41 (FVYL…IWGT), 50–70 (SFFT…FLDV), 99–121 (IVYP…LSIN), 140–160 (MKKV…NVII), 188–208 (FQII…SITL), 229–249 (TAWI…FAFF), and 258–278 (IFYI…PIVM).

The protein belongs to the nematode receptor-like protein srg family.

Its subcellular location is the membrane. This is Serpentine receptor class gamma-4 (srg-4) from Caenorhabditis elegans.